The primary structure comprises 195 residues: Pyridoxal 5'-phosphate synthase subunit PdxT (195 aa).

46-48 serves as a coordination point for L-glutamine; sequence GES. The active-site Nucleophile is C78. L-glutamine-binding positions include R106 and 134–135; that span reads IR. Residues H170 and E172 each act as charge relay system in the active site.

Belongs to the glutaminase PdxT/SNO family. As to quaternary structure, in the presence of PdxS, forms a dodecamer of heterodimers. Only shows activity in the heterodimer.

It catalyses the reaction aldehydo-D-ribose 5-phosphate + D-glyceraldehyde 3-phosphate + L-glutamine = pyridoxal 5'-phosphate + L-glutamate + phosphate + 3 H2O + H(+). It carries out the reaction L-glutamine + H2O = L-glutamate + NH4(+). Its pathway is cofactor biosynthesis; pyridoxal 5'-phosphate biosynthesis. Its function is as follows. Catalyzes the hydrolysis of glutamine to glutamate and ammonia as part of the biosynthesis of pyridoxal 5'-phosphate. The resulting ammonia molecule is channeled to the active site of PdxS. The chain is Pyridoxal 5'-phosphate synthase subunit PdxT from Pseudothermotoga lettingae (strain ATCC BAA-301 / DSM 14385 / NBRC 107922 / TMO) (Thermotoga lettingae).